The following is a 641-amino-acid chain: MPRKLYSPKHSSNPYIKDFDEYKELYKQSIEDPSKFFKNLANENISWMEDFKTTFNNQFNNAKWFEGGKTNISLNCIDRHLENDPNKIALIWEGDDPADSKELTYKELHDEVCKFANVLKDLGVQKGSRVCIYMPMIIETAFAMLACTRIGAVHSVVFGGFSPESLKDRILDADCKIVITADEGLRGGKKVPLKSNVDEALLGCPDVKNTLVIKRTGGEINWDDKKDVWYEDLVKDVSNKCAPEPMDSEDPLFILYTSGSTGKPKGVLHTTAGYLLGAHISFKYLFGIRPEDKYWCTADVGWITGHTYILYGPLSNGATTLMFEGVPTYPSASRCWEICDKHDISIFYTAPTAIRALMAQGDDPVKKTKRDSLRILGTVGEPINPEAWDWYYSVVGKSNCEVIDTWWQTETGSVLISPIAGITPTKPGSATLPFFGVKPSLYDEHGNTLEGSNAGNLVIEQSWPSQIRSIYGDHQRMIDTYFGMYKDIYFTGDGARRDEDGYFWITGRVDDVLNVSGHRLGTAEIESALVLHPKIAEAAVVGFDHPIKGQGIYAFVTLMINESFDDNFSYELKQFVAKEIGAIAKPDLIQNAPGLPKTRSGKIMRRILRKIAENDLSNLGDTTTLADPSVVESLIENKQSL.

Residues 186–189 (RGGK) and Thr-304 each bind CoA. ATP is bound by residues 380 to 382 (GEP), 404 to 409 (DTWWQT), Asp-493, and Arg-508. Position 516 (Ser-516) interacts with CoA. Arg-519 contacts ATP. Residues Val-530, His-532, and Ile-535 each coordinate Mg(2+). N6-acetyllysine is present on Lys-602.

It belongs to the ATP-dependent AMP-binding enzyme family. The cofactor is Mg(2+). Post-translationally, acetylated. Deacetylation by the SIR2-homolog deacetylase activates the enzyme.

It catalyses the reaction acetate + ATP + CoA = acetyl-CoA + AMP + diphosphate. Functionally, catalyzes the conversion of acetate into acetyl-CoA (AcCoA), an essential intermediate at the junction of anabolic and catabolic pathways. AcsA undergoes a two-step reaction. In the first half reaction, AcsA combines acetate with ATP to form acetyl-adenylate (AcAMP) intermediate. In the second half reaction, it can then transfer the acetyl group from AcAMP to the sulfhydryl group of CoA, forming the product AcCoA. The sequence is that of Acetyl-coenzyme A synthetase from Gamma-proteobacterium EBAC31A08.